A 232-amino-acid chain; its full sequence is RNA chaperone ProQ (232 aa).

The segment at 105–182 (EAKARVQAQR…REEQHTPVSD (78 aa)) is disordered. Residues 117 to 136 (QQAKKREAAAAAGEKEDAPR) are compositionally biased toward basic and acidic residues. The segment covering 137–146 (RERKPRPTTP) has biased composition (basic residues). The segment covering 147-177 (RRKEGAERKPRAQKPVEKAPKTAKAPREEQH) has biased composition (basic and acidic residues).

The protein belongs to the ProQ family.

It localises to the cytoplasm. RNA chaperone with significant RNA binding, RNA strand exchange and RNA duplexing activities. May regulate ProP activity through an RNA-based, post-transcriptional mechanism. In Shigella dysenteriae serotype 1 (strain Sd197), this protein is RNA chaperone ProQ.